The sequence spans 544 residues: Chromosomal replication initiator protein DnaA (544 aa).

A domain I, interacts with DnaA modulators region spans residues 1–71 (MNDFWQHCSA…ADMARDFWHT (71 aa)). The segment at 71 to 207 (TPIDVQFVLD…GETDSMYERS (137 aa)) is domain II. Positions 90–105 (AAAPAPASARPASAPG) are enriched in low complexity. Disordered regions lie at residues 90–111 (AAAPAPASARPASAPGSMGGSA) and 180–203 (AAARRTWRPGQSAGSNGNGETDSM). Polar residues predominate over residues 191 to 200 (SAGSNGNGET). The tract at residues 208-424 (KLNPVLTFDN…GALRKILAYS (217 aa)) is domain III, AAA+ region. ATP-binding residues include Gly-252, Gly-254, Lys-255, and Thr-256. The domain IV, binds dsDNA stretch occupies residues 425-544 (KFHGREITIE…LHVLEQTLKG (120 aa)).

It belongs to the DnaA family. In terms of assembly, oligomerizes as a right-handed, spiral filament on DNA at oriC.

It is found in the cytoplasm. Plays an essential role in the initiation and regulation of chromosomal replication. ATP-DnaA binds to the origin of replication (oriC) to initiate formation of the DNA replication initiation complex once per cell cycle. Binds the DnaA box (a 9 base pair repeat at the origin) and separates the double-stranded (ds)DNA. Forms a right-handed helical filament on oriC DNA; dsDNA binds to the exterior of the filament while single-stranded (ss)DNA is stabiized in the filament's interior. The ATP-DnaA-oriC complex binds and stabilizes one strand of the AT-rich DNA unwinding element (DUE), permitting loading of DNA polymerase. After initiation quickly degrades to an ADP-DnaA complex that is not apt for DNA replication. Binds acidic phospholipids. The sequence is that of Chromosomal replication initiator protein DnaA from Paraburkholderia xenovorans (strain LB400).